A 361-amino-acid chain; its full sequence is MAGNTIGQLFRVTTFGESHGLALGCIVDGVPPGIPLTEADLQHDLDRRRPGTSRYTTQRREPDQVKILSGVFEGVTTGTSIGLLIENTDQRSQDYGAIKDLFRPGHADYTYEQKYGLRDYRGGGRSSARETAMRVAAGAIAKKYLAAKFGIVIRGCLTQMGDIPLAIKDWNQVEQNPFFCPDPDKIDALDELMRGLKKEGDSIGAKVTVVADGVPPGLGEPVFDRLDADIAHALMSINAVKGVEIGDGFEVVKLRGSENRDEITKDGFQSNHAGGILGGISSGQQIVANIALKPTSSITVPGHTINRFGEEVEMITKGRHDPCVGIRAVPIAEAMLAIVLMDHFMRQRAQNGDVTTTIPRW.

Residues arginine 48 and arginine 54 each coordinate NADP(+). FMN is bound by residues 125-127 (RSS), 238-239 (NA), glycine 278, 293-297 (KPTSS), and arginine 319.

The protein belongs to the chorismate synthase family. Homotetramer. It depends on FMNH2 as a cofactor.

The catalysed reaction is 5-O-(1-carboxyvinyl)-3-phosphoshikimate = chorismate + phosphate. Its pathway is metabolic intermediate biosynthesis; chorismate biosynthesis; chorismate from D-erythrose 4-phosphate and phosphoenolpyruvate: step 7/7. Catalyzes the anti-1,4-elimination of the C-3 phosphate and the C-6 proR hydrogen from 5-enolpyruvylshikimate-3-phosphate (EPSP) to yield chorismate, which is the branch point compound that serves as the starting substrate for the three terminal pathways of aromatic amino acid biosynthesis. This reaction introduces a second double bond into the aromatic ring system. The protein is Chorismate synthase of Klebsiella pneumoniae (strain 342).